Reading from the N-terminus, the 589-residue chain is Parathyroid hormone/parathyroid hormone-related peptide receptor (589 aa).

The N-terminal stretch at 1 to 28 is a signal peptide; it reads MGAARIAPGLALLLCCPVLSSAYALVDA. At 29–188 the chain is on the extracellular side; the sequence is DDVMTKEEQI…REREVFDRLG (160 aa). 3 cysteine pairs are disulfide-bonded: Cys-48-Cys-117, Cys-108-Cys-148, and Cys-131-Cys-170. A disordered region spans residues 64-105; sequence ESDKGWASASTSGKPKKEKPSGKLHPESEEDKEVPTGSRPRG. Basic and acidic residues predominate over residues 81 to 90; the sequence is EKPSGKLHPE. Asn-151, Asn-161, Asn-166, and Asn-176 each carry an N-linked (GlcNAc...) asparagine glycan. The helical transmembrane segment at 189 to 209 threads the bilayer; sequence MIYTVGYSVSLASLTVAVLIL. Topologically, residues 210 to 223 are cytoplasmic; it reads AYFRRLHCTRNYIH. The chain crosses the membrane as a helical span at residues 224-244; the sequence is MHLFLSFMLRAVSIFVKDAVL. The Extracellular segment spans residues 245-294; that stretch reads YSGTALDEAERLTEEELRAIAQAPPPPAAAAGYVGCRVAVTFFLYFLATN. Residues 295–315 traverse the membrane as a helical segment; it reads YYWILVEGLYLHSLIFMAFFS. Residues 316–318 are Cytoplasmic-facing; the sequence is EKK. The helical transmembrane segment at 319–339 threads the bilayer; the sequence is YLWGFTVFGWGLPAIFVAVWV. The Extracellular segment spans residues 340–360; that stretch reads SVRATLANTGCWDLSSGNKKW. A helical transmembrane segment spans residues 361 to 381; that stretch reads IIQVPILASIVLNFILFINIV. Residues 382-404 are Cytoplasmic-facing; it reads RVLATKLRETNAGRCDTRQQYRK. A helical transmembrane segment spans residues 405-425; sequence LLKSTLVLMPLFGVHYIVFMA. Residues 426 to 439 lie on the Extracellular side of the membrane; the sequence is TPYTEVSGTLWQVQ. The chain crosses the membrane as a helical span at residues 440–460; sequence MHYEMLFNSFQGFFVAIIYCF. The Cytoplasmic segment spans residues 461–589; that stretch reads CNGEVQAEIK…LLQEEWETVM (129 aa). The Important for interaction with G proteins motif lies at 473 to 476; that stretch reads WSRW. The interval 524-549 is disordered; the sequence is AATTNGHPPLPGHTKSGSPALQATPP. Thr-547 carries the post-translational modification Phosphothreonine.

The protein belongs to the G-protein coupled receptor 2 family. As to quaternary structure, homodimer in the absence of bound ligand. Peptide hormone binding leads to dissociation of the homodimer. Post-translationally, N-glycosylated.

The protein localises to the cell membrane. In terms of biological role, G-protein-coupled receptor for parathyroid hormone (PTH) and for parathyroid hormone-related peptide (PTHLH). Ligand binding causes a conformation change that triggers signaling via guanine nucleotide-binding proteins (G proteins) and modulates the activity of downstream effectors, such as adenylate cyclase (cAMP). PTH1R is coupled to G(s) G alpha proteins and mediates activation of adenylate cyclase activity. PTHLH dissociates from PTH1R more rapidly than PTH; as consequence, the cAMP response induced by PTHLH decays faster than the response induced by PTH. In Bos taurus (Bovine), this protein is Parathyroid hormone/parathyroid hormone-related peptide receptor (PTH1R).